The primary structure comprises 264 residues: MQIKPLTPIDRSSKTSEILVQLKNIEVTFAEKQALQNINLTIYKNSITTIVGPNGGGKSTLLKVLLKLLKPSQGQVIHQPGLKIGYVPQKLHLDHSMPITVKKFLSLKPNCSTPSIAAALTLFSIEHLAQNSMQKLSGGELQRVLLARAILDRPQLLVLDEPMQGVDISGQTELYQLLTQTRTWLNCAIIMVSHDLNIVMANTDEVLCVNKHICCAGSPELVSNDPNFIHFFGDQFAKNVAFYSHRHNHHHNLHGDICKGKCEC.

In terms of domain architecture, ABC transporter spans 20 to 235; that stretch reads VQLKNIEVTF…PNFIHFFGDQ (216 aa). 52–59 is an ATP binding site; it reads GPNGGGKS.

This sequence belongs to the ABC transporter superfamily. Zinc importer (TC 3.A.1.15.5) family. As to quaternary structure, the complex is composed of two ATP-binding proteins (ZnuC), two transmembrane proteins (ZnuB) and a solute-binding protein (ZnuA).

It is found in the cell inner membrane. The catalysed reaction is Zn(2+)(out) + ATP(in) + H2O(in) = Zn(2+)(in) + ADP(in) + phosphate(in) + H(+)(in). In terms of biological role, part of the ABC transporter complex ZnuABC involved in zinc import. Responsible for energy coupling to the transport system. The polypeptide is Zinc import ATP-binding protein ZnuC (Haemophilus ducreyi (strain 35000HP / ATCC 700724)).